The primary structure comprises 408 residues: Argininosuccinate synthase (408 aa).

Residues 10-18 (AYSGGLDTS) and alanine 37 contribute to the ATP site. 2 residues coordinate L-citrulline: tyrosine 90 and serine 95. An ATP-binding site is contributed by glycine 120. 3 residues coordinate L-aspartate: threonine 122, asparagine 126, and aspartate 127. Position 126 (asparagine 126) interacts with L-citrulline. L-citrulline contacts are provided by arginine 130, serine 182, serine 191, glutamate 267, and tyrosine 279.

It belongs to the argininosuccinate synthase family. Type 1 subfamily. In terms of assembly, homotetramer.

Its subcellular location is the cytoplasm. It carries out the reaction L-citrulline + L-aspartate + ATP = 2-(N(omega)-L-arginino)succinate + AMP + diphosphate + H(+). It participates in amino-acid biosynthesis; L-arginine biosynthesis; L-arginine from L-ornithine and carbamoyl phosphate: step 2/3. The chain is Argininosuccinate synthase from Paraburkholderia phytofirmans (strain DSM 17436 / LMG 22146 / PsJN) (Burkholderia phytofirmans).